The sequence spans 77 residues: Cell division topological specificity factor (77 aa).

Belongs to the MinE family.

In terms of biological role, prevents the cell division inhibition by proteins MinC and MinD at internal division sites while permitting inhibition at polar sites. This ensures cell division at the proper site by restricting the formation of a division septum at the midpoint of the long axis of the cell. The chain is Cell division topological specificity factor from Helicobacter pylori (strain Shi470).